The sequence spans 144 residues: Maximins 10/H3 (144 aa).

The N-terminal stretch at 1–18 (MNFKYIVAVSFLIASAYA) is a signal peptide. The propeptide occupies 19–43 (RSVKNDEQSLSQRDVLDEESLREFR). Serine amide is present on S70. A propeptide spanning residues 74-123 (TAEDHEVMKRLEAVMRDLDSLDYPEEATERETRGFNQEEIANLFTKKEKR) is cleaved from the precursor. Position 143 is an isoleucine amide (I143).

This sequence belongs to the bombinin family. Expressed by the skin glands.

The protein localises to the secreted. Functionally, maximin-10 shows antimicrobial activity against bacteria and against the fungus C.albicans. It has little hemolytic activity. In terms of biological role, maximin-H3 shows antibacterial activity against both Gram-positive and Gram-negative bacteria. It also shows antimicrobial activity against the fungus C.albicans. Shows strong hemolytic activity. The sequence is that of Maximins 10/H3 from Bombina maxima (Giant fire-bellied toad).